The chain runs to 250 residues: Phosphoribosylaminoimidazole-succinocarboxamide synthase (250 aa).

Belongs to the SAICAR synthetase family.

It carries out the reaction 5-amino-1-(5-phospho-D-ribosyl)imidazole-4-carboxylate + L-aspartate + ATP = (2S)-2-[5-amino-1-(5-phospho-beta-D-ribosyl)imidazole-4-carboxamido]succinate + ADP + phosphate + 2 H(+). It participates in purine metabolism; IMP biosynthesis via de novo pathway; 5-amino-1-(5-phospho-D-ribosyl)imidazole-4-carboxamide from 5-amino-1-(5-phospho-D-ribosyl)imidazole-4-carboxylate: step 1/2. The polypeptide is Phosphoribosylaminoimidazole-succinocarboxamide synthase (Chloroflexus aggregans (strain MD-66 / DSM 9485)).